A 378-amino-acid chain; its full sequence is Probable endopolygalacturonase NFIA_008150 (378 aa).

A signal peptide spans 1–19; the sequence is MLKLIGSLVLLASAAEVIA. Residues 20–35 constitute a propeptide that is removed on maturation; it reads SPLAESVAPSITLEKR. Cys-38 and Cys-56 are oxidised to a cystine. PbH1 repeat units follow at residues 147–169, 170–200, and 201–222; these read TSSS…SING, CDGL…DIGS, and SSNI…AVNS. Catalysis depends on Asp-215, which acts as the Proton donor. Cys-217 and Cys-233 are oxidised to a cystine. His-237 is an active-site residue. PbH1 repeat units lie at residues 247-273 and 281-303; these read RSDN…RIKA and IKGI…LIEQ. Asn-254 is a glycosylation site (N-linked (GlcNAc...) asparagine). Asn-327 is a glycosylation site (N-linked (GlcNAc...) asparagine). Intrachain disulfides connect Cys-345–Cys-350 and Cys-369–Cys-378.

The protein belongs to the glycosyl hydrolase 28 family.

It is found in the secreted. The enzyme catalyses (1,4-alpha-D-galacturonosyl)n+m + H2O = (1,4-alpha-D-galacturonosyl)n + (1,4-alpha-D-galacturonosyl)m.. Functionally, involved in maceration and soft-rotting of plant tissue. Hydrolyzes the 1,4-alpha glycosidic bonds of de-esterified pectate in the smooth region of the plant cell wall. In Neosartorya fischeri (strain ATCC 1020 / DSM 3700 / CBS 544.65 / FGSC A1164 / JCM 1740 / NRRL 181 / WB 181) (Aspergillus fischerianus), this protein is Probable endopolygalacturonase NFIA_008150.